Here is a 213-residue protein sequence, read N- to C-terminus: Urease accessory protein UreG (213 aa).

10 to 17 (GPVGSGKT) is a GTP binding site.

The protein belongs to the SIMIBI class G3E GTPase family. UreG subfamily. Homodimer. UreD, UreF and UreG form a complex that acts as a GTP-hydrolysis-dependent molecular chaperone, activating the urease apoprotein by helping to assemble the nickel containing metallocenter of UreC. The UreE protein probably delivers the nickel.

The protein localises to the cytoplasm. Its function is as follows. Facilitates the functional incorporation of the urease nickel metallocenter. This process requires GTP hydrolysis, probably effectuated by UreG. The polypeptide is Urease accessory protein UreG (Deinococcus radiodurans (strain ATCC 13939 / DSM 20539 / JCM 16871 / CCUG 27074 / LMG 4051 / NBRC 15346 / NCIMB 9279 / VKM B-1422 / R1)).